The sequence spans 523 residues: NADP-specific glutamate dehydrogenase (523 aa).

The disordered stretch occupies residues 26–50; that stretch reads CARGRSAKRDVAAKRLRSRSPRMDA. Residue Lys-202 is part of the active site.

This sequence belongs to the Glu/Leu/Phe/Val dehydrogenases family. As to quaternary structure, homo- and heterohexamer of alpha and beta subunits. Both subunits are encoded by the same gene. In terms of processing, the N-termini of the alpha and the beta chains are blocked.

Its subcellular location is the plastid. The protein localises to the chloroplast. The catalysed reaction is L-glutamate + NADP(+) + H2O = 2-oxoglutarate + NH4(+) + NADPH + H(+). This Chlorella sorokiniana (Freshwater green alga) protein is NADP-specific glutamate dehydrogenase.